A 478-amino-acid polypeptide reads, in one-letter code: MLSDELESKPELLVQFVQNTSIPLGQGLVESEAKDITCLSLLPVTEASECSRLMLPDETPNHANSSKEVPSSAVLRSLQVNVGPDGEETRAQTVQKSPEFLTTPESPSLLQDLQPSDSTSFILLNLTRAGLGSSAEHFVFVQDETEDSGADFLSAESTDSSIPWFLRVQELAHDSLIAATRAQLAKNAKTGSNGENVHLGSGDGQPKDSGPLPQAEKKLKCTVEGCDRTFVWPAHFKYHLKTHRNERSFICPAEGCGKSFYVLQRLKVHMRTHNGEKPFMCHESGCGKQFTTAGNLKNHRRIHTGEKPFLCEAQGCGRSFAEYSSLRKHLVVHSGEKPHQCQVCGKTFSQSGSRNVHMRKHHLQLGTTGSQEQDQTAEPLMGSSLLEDASVPNKNLVSMNSQSSLGGESLNLSNTNSILGVDDEVLTERASRPLSSVPDVTHHLVTMQSGRQSYEVSVLTAVNPQELLNQGDLTERQT.

Disordered regions lie at residues 84 to 113 (PDGEETRAQTVQKSPEFLTTPESPSLLQDL) and 187 to 214 (NAKTGSNGENVHLGSGDGQPKDSGPLPQ). Residues 103–113 (TPESPSLLQDL) are compositionally biased toward polar residues. C2H2-type zinc fingers lie at residues 219–243 (LKCTVEGCDRTFVWPAHFKYHLKTH), 249–273 (FICPAEGCGKSFYVLQRLKVHMRTH), 279–303 (FMCHESGCGKQFTTAGNLKNHRRIH), 309–333 (FLCEAQGCGRSFAEYSSLRKHLVVH), and 339–362 (HQCQVCGKTFSQSGSRNVHMRKHH). Zn(2+) is bound by residues Cys-221, Cys-226, His-239, His-243, Cys-251, Cys-256, His-269, His-273, Cys-281, Cys-286, His-299, His-303, Cys-311, Cys-316, His-329, His-333, Cys-341, Cys-344, His-357, and His-361.

In terms of assembly, interacts with CDKN2A/p14ARF. O-glycosylated. O-GlcNAcylation may occur in response to increasing glucose levels and affect transcription factor activity. In terms of processing, sumoylated. Sumoylation increases its half-life, possibly by blocking ubiquitin-mediated degradation.

The protein localises to the nucleus. It localises to the chromosome. Functionally, transcription factor that binds to the sequence motif 5'-CATCCCATAATA-3', and is specifically required to silence expression of fetal hemoglobin in adult erythroid cells. Prevents expression of fetal hemoglobin genes HBG1 and HBG2 through CHD4: acts as a direct transcriptional activator of CHD4, a central component of the NuRD complex that represses transcription of fetal hemoglobin genes HBG1 and HBG2 in erythroid cells. May also activate transcription of matrix-remodeling genes such as MMP1 during fibroblast senescence. May activate transcription of the gap junction gene GJC1, perhaps in response to increasing glucose. However, recent studies suggest that ZNF410 is dedicated to regulate expression of a single gene: CHD4. In Mus musculus (Mouse), this protein is Zinc finger protein 410.